Reading from the N-terminus, the 327-residue chain is Malate dehydrogenase (327 aa).

12-18 (GAAGQIA) lines the NAD(+) pocket. Residues arginine 93 and arginine 99 each contribute to the substrate site. NAD(+) is bound by residues asparagine 106, glutamine 113, and 130 to 132 (VGN). The substrate site is built by asparagine 132 and arginine 163. The active-site Proton acceptor is histidine 188.

The protein belongs to the LDH/MDH superfamily. MDH type 2 family.

It catalyses the reaction (S)-malate + NAD(+) = oxaloacetate + NADH + H(+). Catalyzes the reversible oxidation of malate to oxaloacetate. This chain is Malate dehydrogenase, found in Acidiphilium cryptum (strain JF-5).